Reading from the N-terminus, the 926-residue chain is DNA topoisomerase 3-alpha (926 aa).

The Toprim domain occupies 10-154 (TVLNVAEKPS…NLFIRRAHFS (145 aa)). Residues Glu-16, Asp-123, and Asp-125 each coordinate Mg(2+). In terms of domain architecture, Topo IA-type catalytic spans 172–604 (NQLFAEAVDA…CLQQMKACFL (433 aa)). The interval 219–224 (SYGPCQ) is interaction with DNA. Residue Tyr-342 is the O-(5'-phospho-DNA)-tyrosine intermediate of the active site. Residues 642-670 (CNLCNESDMALRKNRDGNFMVGCMNYPQC) form a C4-type zinc finger. Disordered regions lie at residues 740–760 (SRSQARRTPGTAPSNNIQGSN) and 775–806 (HASTNCPSRVPASRNSRPTATNPRNDESTVSC). A compositionally biased stretch (polar residues) spans 750–760 (TAPSNNIQGSN). A CCHC-type 1 zinc finger spans residues 767 to 782 (CIHCQQRGHASTNCPS). Residues Cys-806, Cys-809, Cys-831, and Cys-836 each coordinate Zn(2+). The segment at 806–845 (CNTCGSQCVLRTANTEANRGRQFFSCPTQGCSFFAWEDSI) adopts a GRF-type zinc-finger fold. Residues 849-890 (SGNATTGSNSGGSGRRGSRGRGRGGRGGQSSGGRRGSGTSFV) are disordered. The segment covering 873-884 (GRGGQSSGGRRG) has biased composition (gly residues). Residues 901-917 (RCFSCGDPSHFANACPN) form a CCHC-type 2 zinc finger.

This sequence belongs to the type IA topoisomerase family. As to quaternary structure, component of the RMI complex, containing at least TOP3A and RMI1. The RMI complex interacts with RECQL4A. The cofactor is Mg(2+).

It carries out the reaction ATP-independent breakage of single-stranded DNA, followed by passage and rejoining.. Functionally, releases the supercoiling and torsional tension of DNA introduced during the DNA replication and transcription by transiently cleaving and rejoining one strand of the DNA duplex. Introduces a single-strand break via transesterification at a target site in duplex DNA. The scissile phosphodiester is attacked by the catalytic tyrosine of the enzyme, resulting in the formation of a DNA-(5'-phosphotyrosyl)-enzyme intermediate and the expulsion of a 3'-OH DNA strand. The free DNA strand then undergoes passage around the unbroken strand thus removing DNA supercoils. Finally, in the religation step, the DNA 3'-OH attacks the covalent intermediate to expel the active-site tyrosine and restore the DNA phosphodiester backbone. Essential component of the RMI complex, a complex that plays an important role in the resolution step of homologous recombination, in a process called Holliday Junction dissolution, to limit DNA crossover formation in cells. Together with RMI1, is essential for the resolution of meiotic recombination intermediates, a step that prevents entanglement of the parental chromosomes. May have DNA decatenation activity. The polypeptide is DNA topoisomerase 3-alpha (TOP3A) (Arabidopsis thaliana (Mouse-ear cress)).